Consider the following 338-residue polypeptide: Uroporphyrinogen decarboxylase (338 aa).

Residues 27–31 (RQAGR), Asp-77, Tyr-151, Ser-203, and His-317 contribute to the substrate site.

Belongs to the uroporphyrinogen decarboxylase family. As to quaternary structure, homodimer.

The protein localises to the cytoplasm. The enzyme catalyses uroporphyrinogen III + 4 H(+) = coproporphyrinogen III + 4 CO2. The protein operates within porphyrin-containing compound metabolism; protoporphyrin-IX biosynthesis; coproporphyrinogen-III from 5-aminolevulinate: step 4/4. In terms of biological role, catalyzes the decarboxylation of four acetate groups of uroporphyrinogen-III to yield coproporphyrinogen-III. This is Uroporphyrinogen decarboxylase from Wolbachia pipientis wMel.